The following is a 337-amino-acid chain: 4-hydroxy-2-oxovalerate aldolase (337 aa).

Residues 6–256 (IRIMDTTLRD…ETGIDLFQIM (251 aa)) form the Pyruvate carboxyltransferase domain. 14-15 (RD) contacts substrate. Asp15 serves as a coordination point for Mn(2+). His18 acts as the Proton acceptor in catalysis. The substrate site is built by Ser168 and His195. Mn(2+) contacts are provided by His195 and His197. Tyr286 lines the substrate pocket.

Belongs to the 4-hydroxy-2-oxovalerate aldolase family.

It catalyses the reaction (S)-4-hydroxy-2-oxopentanoate = acetaldehyde + pyruvate. The chain is 4-hydroxy-2-oxovalerate aldolase (nahM) from Geobacillus genomosp. 3.